The following is a 293-amino-acid chain: Aromatic amino acid exporter YddG (293 aa).

At 1–6 the chain is on the cytoplasmic side; the sequence is MTSQKA. The chain crosses the membrane as a helical span at residues 7-27; sequence TLIGLVAIVLWSTMVGLIRGV. The region spanning 15–137 is the EamA 1 domain; sequence VLWSTMVGLI…IALTGVCWVL (123 aa). Over 28–33 the chain is Periplasmic; that stretch reads SEGLGP. A helical transmembrane segment spans residues 34 to 54; the sequence is VGGAAMIYSLSGLLLIFTVGL. Residues 55-63 lie on the Cytoplasmic side of the membrane; it reads PDIRRFPGR. A helical membrane pass occupies residues 64-84; it reads YLIAGSVLFVSYEICLALSLG. Topologically, residues 85–92 are periplasmic; the sequence is YAATRHQA. The helical transmembrane segment at 93-113 threads the bilayer; the sequence is IEVGMVNYLWPSLTILFAILF. At 114–119 the chain is on the cytoplasmic side; that stretch reads NGQKTN. A helical membrane pass occupies residues 120–140; it reads WLIVPGLLIALTGVCWVLGGE. Residues 141–147 are Periplasmic-facing; it reads NGLNPGE. Residues 148–168 traverse the membrane as a helical segment; sequence IISNVATSPLSYLLAFLGAFI. Residues 167–285 form the EamA 2 domain; sequence FIWATYCTVT…AVMVCVGSLL (119 aa). At 169-182 the chain is on the cytoplasmic side; the sequence is WATYCTVTNKYARG. Residues 183–203 form a helical membrane-spanning segment; the sequence is FNGITVFVLLTAVALWLHYFL. Residues 204 to 207 lie on the Periplasmic side of the membrane; that stretch reads TPQP. The chain crosses the membrane as a helical span at residues 208-228; it reads AMIFSLPVIAKLFTAALTLGF. Residues 229–243 lie on the Cytoplasmic side of the membrane; it reads AYAAWNVGILHGNVT. A helical membrane pass occupies residues 244–264; that stretch reads IMAVGSYFTPVMSSALAALLL. Over 265 to 267 the chain is Periplasmic; that stretch reads SSP. Residues 268–288 form a helical membrane-spanning segment; that stretch reads LSFSFWQGAVMVCVGSLLCWL. Residues 289–293 are Cytoplasmic-facing; the sequence is ATRRR.

Belongs to the drug/metabolite transporter (DMT) superfamily. Aromatic amino acid/paraquat exporter (ArAA/P-E) (TC 2.A.7.17) family.

The protein localises to the cell inner membrane. Amino acid transporter with broad substrate specificity. Required for resistance to methyl viologen. May function with OmpD porin. The chain is Aromatic amino acid exporter YddG (yddG) from Salmonella typhimurium (strain 14028s / SGSC 2262).